We begin with the raw amino-acid sequence, 367 residues long: Nociceptin receptor (367 aa).

Residues 1 to 45 (MESLFPAPYWEVLYGSHFQGNLSLLNETVPHHLLLNASHSAFLPL) lie on the Extracellular side of the membrane. 3 N-linked (GlcNAc...) asparagine glycosylation sites follow: asparagine 21, asparagine 26, and asparagine 36. The chain crosses the membrane as a helical span at residues 46 to 71 (GLKVTIVGLYLAVCIGGLLGNCLVMY). The Cytoplasmic segment spans residues 72-84 (VILRHTKMKTATN). The helical transmembrane segment at 85–106 (IYIFNLALADTLVLLTLPFQGT) threads the bilayer. At 107–121 (DILLGFWPFGNALCK) the chain is on the extracellular side. The cysteines at positions 120 and 197 are disulfide-linked. Residues 122–143 (TVIAIDYYNMFTSTFTLTAMSV) traverse the membrane as a helical segment. Over 144-162 (DRYVAICHPIRALDVRTSS) the chain is Cytoplasmic. The chain crosses the membrane as a helical span at residues 163–185 (KAQAVNVAIWALASVVGVPVAIM). The Extracellular segment spans residues 186–208 (GSAQVEDEEIECLVEIPAPQDYW). The chain crosses the membrane as a helical span at residues 209-233 (GPVFAICIFLFSFIIPVLIISVCYS). Residues 234–261 (LMIRRLRGVRLLSGSREKDRNLRRITRL) are Cytoplasmic-facing. Residues 262–282 (VLVVVAVFVGCWTPVQVFVLV) traverse the membrane as a helical segment. The Extracellular segment spans residues 283–297 (QGLGVQPGSETAVAI). Residues 298-319 (LRFCTALGYVNSCLNPILYAFL) form a helical membrane-spanning segment. The Cytoplasmic segment spans residues 320–367 (DENFKACFRKFCCASSLHREMQVSDRVRSIAKDVGLGCKTSETVPRPA). Residue cysteine 331 is the site of S-palmitoyl cysteine attachment.

The protein belongs to the G-protein coupled receptor 1 family. Phosphorylation at Ser-360 requires GRK3. As to expression, highly expressed in several brain areas, the intestine, liver and spleen. Detected in sympathetic stellate ganglion neurons.

The protein resides in the cell membrane. It localises to the cytoplasmic vesicle. Its function is as follows. G-protein coupled opioid receptor that functions as a receptor for the endogenous neuropeptide nociceptin. Ligand binding causes a conformation change that triggers signaling via guanine nucleotide-binding proteins (G proteins) and modulates the activity of down-stream effectors. Signaling via G proteins mediates inhibition of adenylate cyclase activity and calcium channel activity. Arrestins modulate signaling via G proteins and mediate the activation of alternative signaling pathways that lead to the activation of MAP kinases. Plays a role in modulating nociception and the perception of pain. Plays a role in the regulation of locomotor activity by the neuropeptide nociceptin. In Rattus norvegicus (Rat), this protein is Nociceptin receptor (Oprl1).